A 173-amino-acid chain; its full sequence is MKRVFLVGYMGAGKTTVGKELAKLAGLSFIDLDYYIEGRYHKAVSQIFAERGEEAFREIERNMLHEVAEFEDVLISTGGGAPCFFDNMEFMNASGTTVYLKVSVEELAKRLELCKHTRPVLKGRSGEELRAFIAESLEKRNPFYTKASITFDAEKMLTESDVHDISNALMKIL.

11 to 16 (GAGKTT) is an ATP binding site. T15 provides a ligand contact to Mg(2+). Substrate is bound by residues D33, R57, and G79. An ATP-binding site is contributed by R118. Substrate is bound at residue R140.

It belongs to the shikimate kinase family. In terms of assembly, monomer. The cofactor is Mg(2+).

The protein localises to the cytoplasm. It catalyses the reaction shikimate + ATP = 3-phosphoshikimate + ADP + H(+). It functions in the pathway metabolic intermediate biosynthesis; chorismate biosynthesis; chorismate from D-erythrose 4-phosphate and phosphoenolpyruvate: step 5/7. Functionally, catalyzes the specific phosphorylation of the 3-hydroxyl group of shikimic acid using ATP as a cosubstrate. This chain is Shikimate kinase, found in Parabacteroides distasonis (strain ATCC 8503 / DSM 20701 / CIP 104284 / JCM 5825 / NCTC 11152).